Consider the following 136-residue polypeptide: Transcription antitermination protein NusB (136 aa).

It belongs to the NusB family.

Functionally, involved in transcription antitermination. Required for transcription of ribosomal RNA (rRNA) genes. Binds specifically to the boxA antiterminator sequence of the ribosomal RNA (rrn) operons. This Kineococcus radiotolerans (strain ATCC BAA-149 / DSM 14245 / SRS30216) protein is Transcription antitermination protein NusB.